A 346-amino-acid polypeptide reads, in one-letter code: N-acetyl-gamma-glutamyl-phosphate reductase (346 aa).

C150 is an active-site residue.

This sequence belongs to the NAGSA dehydrogenase family. Type 1 subfamily.

The protein localises to the cytoplasm. The enzyme catalyses N-acetyl-L-glutamate 5-semialdehyde + phosphate + NADP(+) = N-acetyl-L-glutamyl 5-phosphate + NADPH + H(+). Its pathway is amino-acid biosynthesis; L-arginine biosynthesis; N(2)-acetyl-L-ornithine from L-glutamate: step 3/4. Its function is as follows. Catalyzes the NADPH-dependent reduction of N-acetyl-5-glutamyl phosphate to yield N-acetyl-L-glutamate 5-semialdehyde. The sequence is that of N-acetyl-gamma-glutamyl-phosphate reductase from Desulforamulus reducens (strain ATCC BAA-1160 / DSM 100696 / MI-1) (Desulfotomaculum reducens).